We begin with the raw amino-acid sequence, 503 residues long: Arabinose import ATP-binding protein AraG 1 (503 aa).

ABC transporter domains are found at residues 5–240 (LRFD…MVGR) and 251–497 (RTLG…LPQT). 37–44 (GENGAGKS) lines the ATP pocket.

This sequence belongs to the ABC transporter superfamily. Arabinose importer (TC 3.A.1.2.2) family. The complex is composed of two ATP-binding proteins (AraG), two transmembrane proteins (AraH) and a solute-binding protein (AraF).

It is found in the cell inner membrane. It carries out the reaction L-arabinose(out) + ATP + H2O = L-arabinose(in) + ADP + phosphate + H(+). Functionally, part of the ABC transporter complex AraFGH involved in arabinose import. Responsible for energy coupling to the transport system. The protein is Arabinose import ATP-binding protein AraG 1 of Burkholderia cenocepacia (strain HI2424).